Consider the following 108-residue polypeptide: Ig kappa chain V region BS-5 (108 aa).

Residues 1 to 23 (DVVMTQTPASVSEPVGGTVTIKC) form a framework-1 region. Intrachain disulfides connect Cys-23–Cys-88 and Cys-80–Gly-108. Residues 24 to 34 (QASQSIYSNLA) are complementarity-determining-1. The interval 35 to 49 (WYQZKPGQPPKLLIY) is framework-2. The interval 50-56 (KASTLES) is complementarity-determining-2. The interval 57 to 88 (GVPSRFKGSGSGTDFTLTISDLECADAATYFC) is framework-3. The complementarity-determining-3 stretch occupies residues 89–97 (QGSBYTGTV). Positions 98–107 (FGGGTEVVVK) are framework-4.

This Oryctolagus cuniculus (Rabbit) protein is Ig kappa chain V region BS-5.